A 152-amino-acid chain; its full sequence is Superoxide dismutase [Cu-Zn] (152 aa).

Cu cation contacts are provided by His44, His46, and His61. His61, His69, His78, and Asp81 together coordinate Zn(2+). His118 is a binding site for Cu cation.

It belongs to the Cu-Zn superoxide dismutase family. In terms of assembly, homodimer. Requires Cu cation as cofactor. Zn(2+) is required as a cofactor.

It localises to the cytoplasm. The catalysed reaction is 2 superoxide + 2 H(+) = H2O2 + O2. In terms of biological role, destroys radicals which are normally produced within the cells and which are toxic to biological systems. The sequence is that of Superoxide dismutase [Cu-Zn] from Drosophila pseudoobscura pseudoobscura (Fruit fly).